Consider the following 190-residue polypeptide: Pyridoxal 5'-phosphate synthase subunit PdxT (190 aa).

Residue 46–48 participates in L-glutamine binding; the sequence is GES. The Nucleophile role is filled by cysteine 78. L-glutamine contacts are provided by residues arginine 108 and 137–138; that span reads IR. Catalysis depends on charge relay system residues histidine 174 and glutamate 176.

This sequence belongs to the glutaminase PdxT/SNO family. As to quaternary structure, in the presence of PdxS, forms a dodecamer of heterodimers. Only shows activity in the heterodimer.

The catalysed reaction is aldehydo-D-ribose 5-phosphate + D-glyceraldehyde 3-phosphate + L-glutamine = pyridoxal 5'-phosphate + L-glutamate + phosphate + 3 H2O + H(+). It catalyses the reaction L-glutamine + H2O = L-glutamate + NH4(+). It participates in cofactor biosynthesis; pyridoxal 5'-phosphate biosynthesis. Catalyzes the hydrolysis of glutamine to glutamate and ammonia as part of the biosynthesis of pyridoxal 5'-phosphate. The resulting ammonia molecule is channeled to the active site of PdxS. This chain is Pyridoxal 5'-phosphate synthase subunit PdxT, found in Herpetosiphon aurantiacus (strain ATCC 23779 / DSM 785 / 114-95).